A 394-amino-acid chain; its full sequence is Elongation factor Tu (394 aa).

The 195-residue stretch at 10-204 folds into the tr-type G domain; the sequence is KPHVNVGTIG…ALDTYIPEPE (195 aa). Positions 19–26 are G1; that stretch reads GHVDHGKT. Residue 19 to 26 participates in GTP binding; it reads GHVDHGKT. Threonine 26 contributes to the Mg(2+) binding site. Residues 60 to 64 are G2; that stretch reads GITIN. Residues 81 to 84 are G3; the sequence is DCPG. Residues 81–85 and 136–139 each bind GTP; these read DCPGH and NKCD. Positions 136 to 139 are G4; that stretch reads NKCD. The interval 174–176 is G5; sequence SAL.

Belongs to the TRAFAC class translation factor GTPase superfamily. Classic translation factor GTPase family. EF-Tu/EF-1A subfamily. Monomer.

Its subcellular location is the cytoplasm. The catalysed reaction is GTP + H2O = GDP + phosphate + H(+). In terms of biological role, GTP hydrolase that promotes the GTP-dependent binding of aminoacyl-tRNA to the A-site of ribosomes during protein biosynthesis. This chain is Elongation factor Tu, found in Shewanella sediminis (strain HAW-EB3).